Here is a 1357-residue protein sequence, read N- to C-terminus: DNA-directed RNA polymerase subunit beta (1357 aa).

This sequence belongs to the RNA polymerase beta chain family. In terms of assembly, the RNAP catalytic core consists of 2 alpha, 1 beta, 1 beta' and 1 omega subunit. When a sigma factor is associated with the core the holoenzyme is formed, which can initiate transcription.

It catalyses the reaction RNA(n) + a ribonucleoside 5'-triphosphate = RNA(n+1) + diphosphate. DNA-dependent RNA polymerase catalyzes the transcription of DNA into RNA using the four ribonucleoside triphosphates as substrates. In Pseudomonas aeruginosa (strain LESB58), this protein is DNA-directed RNA polymerase subunit beta.